The sequence spans 520 residues: Target of rapamycin complex 2 subunit MAPKAP1 (520 aa).

Residues 139–267 enclose the CRIM domain; it reads QSILSVRLEQ…GFSTLALVEK (129 aa). The tract at residues 279-353 is SIN1-type RBD; it reads LFVRINAAHG…QNSLEFCLVR (75 aa). The tract at residues 310-333 is disordered; that stretch reads KRRKGSQRNSGPQYRLEKQSQPNV. The region spanning 382 to 487 is the SIN1-type PH domain; sequence QYKSFKVSMI…IVLKVNYILE (106 aa). Residues arginine 393, lysine 428, and lysine 464 each coordinate a 1,2-diacyl-sn-glycero-3-phospho-(1D-myo-inositol-3,4,5-trisphosphate).

Belongs to the SIN1 family. As to quaternary structure, component of the mechanistic target of rapamycin complex 2 (mTORC2), consisting in two heterotretramers composed of MTOR, MLST8, RICTOR and MAPKAP1/SIN1. Contrary to mTORC1, mTORC2 does not bind to and is not sensitive to FKBP12-rapamycin.

It is found in the cell membrane. It localises to the endoplasmic reticulum membrane. The protein resides in the early endosome membrane. The protein localises to the late endosome membrane. Its subcellular location is the lysosome membrane. It is found in the golgi apparatus membrane. It localises to the mitochondrion outer membrane. The protein resides in the cytoplasm. The protein localises to the perinuclear region. Its subcellular location is the nucleus. With respect to regulation, phosphatidylinositol 3,4,5-trisphosphate (PI(3,4,5)P3) promotes MTOR activation by relieving MAPKAP1/SIN1-mediated inhibition of MTOR that takes place in absence of PI(3,4,5)P3. Its function is as follows. Component of the mechanistic target of rapamycin complex 2 (mTORC2), which transduces signals from growth factors to pathways involved in proliferation, cytoskeletal organization, lipogenesis and anabolic output. In response to growth factors, mTORC2 phosphorylates and activates AGC protein kinase family members, including AKT (AKT1, AKT2 and AKT3), PKC (PRKCA, PRKCB and PRKCE) and SGK1. In contrast to mTORC1, mTORC2 is nutrient-insensitive. Within the mTORC2 complex, MAPKAP1/SIN1 acts as a substrate adapter which recognizes and binds AGC protein kinase family members for phosphorylation by MTOR. The chain is Target of rapamycin complex 2 subunit MAPKAP1 (mapkap1) from Xenopus tropicalis (Western clawed frog).